Here is a 261-residue protein sequence, read N- to C-terminus: MAHQAHAYHMVDPSPWPITGATAALLVTSGLAAWFHFNSMILILMGLTLLLLTMYQWWRDIIRESTFQGHHTLPVQKSLRYGMILFITSEVFFFLGFFWAFYHSSLAPTPELGGLWPPTGITPLDPFEVPLLNTAVLLASGITVTWAHHSLMEGQRKEAIQSLFITVLLGLYFTALQATEYYESPFTIADGAYGSTFFVATGFHGLHVIIGSTFLIVCLVRQTQYHFTSNHHFGFEAAAWYWHFVDVVWLFLYVSIYWWGS.

Topologically, residues 1–15 (MAHQAHAYHMVDPSP) are mitochondrial matrix. Residues 16 to 34 (WPITGATAALLVTSGLAAW) form a helical membrane-spanning segment. Over 35 to 40 (FHFNSM) the chain is Mitochondrial intermembrane. A helical transmembrane segment spans residues 41-66 (ILILMGLTLLLLTMYQWWRDIIREST). Topologically, residues 67–72 (FQGHHT) are mitochondrial matrix. Residues 73-105 (LPVQKSLRYGMILFITSEVFFFLGFFWAFYHSS) traverse the membrane as a helical segment. Over 106-128 (LAPTPELGGLWPPTGITPLDPFE) the chain is Mitochondrial intermembrane. The chain crosses the membrane as a helical span at residues 129–152 (VPLLNTAVLLASGITVTWAHHSLM). At 153 to 155 (EGQ) the chain is on the mitochondrial matrix side. The helical transmembrane segment at 156–183 (RKEAIQSLFITVLLGLYFTALQATEYYE) threads the bilayer. Over 184-190 (SPFTIAD) the chain is Mitochondrial intermembrane. Residues 191 to 223 (GAYGSTFFVATGFHGLHVIIGSTFLIVCLVRQT) form a helical membrane-spanning segment. Residues 224 to 232 (QYHFTSNHH) lie on the Mitochondrial matrix side of the membrane. The chain crosses the membrane as a helical span at residues 233-256 (FGFEAAAWYWHFVDVVWLFLYVSI). Over 257-261 (YWWGS) the chain is Mitochondrial intermembrane.

The protein belongs to the cytochrome c oxidase subunit 3 family. In terms of assembly, component of the cytochrome c oxidase (complex IV, CIV), a multisubunit enzyme composed of 14 subunits. The complex is composed of a catalytic core of 3 subunits MT-CO1, MT-CO2 and MT-CO3, encoded in the mitochondrial DNA, and 11 supernumerary subunits COX4I, COX5A, COX5B, COX6A, COX6B, COX6C, COX7A, COX7B, COX7C, COX8 and NDUFA4, which are encoded in the nuclear genome. The complex exists as a monomer or a dimer and forms supercomplexes (SCs) in the inner mitochondrial membrane with NADH-ubiquinone oxidoreductase (complex I, CI) and ubiquinol-cytochrome c oxidoreductase (cytochrome b-c1 complex, complex III, CIII), resulting in different assemblies (supercomplex SCI(1)III(2)IV(1) and megacomplex MCI(2)III(2)IV(2)).

The protein localises to the mitochondrion inner membrane. It catalyses the reaction 4 Fe(II)-[cytochrome c] + O2 + 8 H(+)(in) = 4 Fe(III)-[cytochrome c] + 2 H2O + 4 H(+)(out). Functionally, component of the cytochrome c oxidase, the last enzyme in the mitochondrial electron transport chain which drives oxidative phosphorylation. The respiratory chain contains 3 multisubunit complexes succinate dehydrogenase (complex II, CII), ubiquinol-cytochrome c oxidoreductase (cytochrome b-c1 complex, complex III, CIII) and cytochrome c oxidase (complex IV, CIV), that cooperate to transfer electrons derived from NADH and succinate to molecular oxygen, creating an electrochemical gradient over the inner membrane that drives transmembrane transport and the ATP synthase. Cytochrome c oxidase is the component of the respiratory chain that catalyzes the reduction of oxygen to water. Electrons originating from reduced cytochrome c in the intermembrane space (IMS) are transferred via the dinuclear copper A center (CU(A)) of subunit 2 and heme A of subunit 1 to the active site in subunit 1, a binuclear center (BNC) formed by heme A3 and copper B (CU(B)). The BNC reduces molecular oxygen to 2 water molecules using 4 electrons from cytochrome c in the IMS and 4 protons from the mitochondrial matrix. The chain is Cytochrome c oxidase subunit 3 (MT-CO3) from Latimeria chalumnae (Coelacanth).